Consider the following 876-residue polypeptide: Alanine--tRNA ligase (876 aa).

Residues His564, His568, Cys666, and His670 each contribute to the Zn(2+) site.

Belongs to the class-II aminoacyl-tRNA synthetase family. Homotetramer. It depends on Zn(2+) as a cofactor.

The protein localises to the cytoplasm. It catalyses the reaction tRNA(Ala) + L-alanine + ATP = L-alanyl-tRNA(Ala) + AMP + diphosphate. Its function is as follows. Catalyzes the attachment of alanine to tRNA(Ala) in a two-step reaction: alanine is first activated by ATP to form Ala-AMP and then transferred to the acceptor end of tRNA(Ala). Also edits incorrectly charged Ser-tRNA(Ala) and Gly-tRNA(Ala) via its editing domain. The chain is Alanine--tRNA ligase from Salmonella choleraesuis (strain SC-B67).